Consider the following 816-residue polypeptide: Homeobox-leucine zipper protein ROC9 (816 aa).

Positions V26 to A104 are disordered. Over residues K92–R101 the composition is skewed to basic residues. Residues R95 to Q154 constitute a DNA-binding region (homeobox). Residues Q149–K182 adopt a coiled-coil conformation. The tract at residues K265 to D296 is disordered. Residues H302–F541 enclose the START domain.

The protein belongs to the HD-ZIP homeobox family. Class IV subfamily.

It is found in the nucleus. In terms of biological role, probable transcription factor. The protein is Homeobox-leucine zipper protein ROC9 (ROC9) of Oryza sativa subsp. japonica (Rice).